The chain runs to 143 residues: Brain ribonuclease (143 aa).

Positions 1–21 (KESAAAKFRRQHMDSGSSSSG) are disordered. Substrate-binding residues include Lys7 and Arg10. The Proton acceptor role is filled by His12. 4 cysteine pairs are disulfide-bonded: Cys26-Cys84, Cys40-Cys95, Cys58-Cys110, and Cys65-Cys72. Residue 41–45 (KPVNT) participates in substrate binding. The N-linked (GlcNAc...) asparagine glycan is linked to Asn62. Residues Lys66 and Arg85 each coordinate substrate. Catalysis depends on His119, which acts as the Proton donor. Residue Thr129 is glycosylated (O-linked (GalNAc...) threonine). An O-linked (GalNAc...) serine glycan is attached at Ser133.

This sequence belongs to the pancreatic ribonuclease family.

It localises to the secreted. The sequence is that of Brain ribonuclease (BRN) from Ovis aries (Sheep).